The following is a 290-amino-acid chain: UPF0761 membrane protein YihY (290 aa).

The Cytoplasmic portion of the chain corresponds to 1–43 (MLKTVHQKAGRHTRPVRAWLKLLWQRIDEDNMTTLAGNLAYVS). Residues 44–64 (LLSLVPLIAVVFALFAAFPMF) form a helical membrane-spanning segment. Residues 65-103 (SDVSIQLRHFIFANFMPATGDVIQRYIEQFVANSNKMTA) are Periplasmic-facing. Residues 104 to 124 (VGACGLIVTALLLMYAIDSAL) form a helical membrane-spanning segment. The Cytoplasmic segment spans residues 125–139 (NTIWRSKRTRPKVYS). Residues 140-160 (FAVYWMILTLGPLLAGVSLAI) traverse the membrane as a helical segment. The Periplasmic portion of the chain corresponds to 161–179 (SSYLLSLRWASDLNTVIDN). Residues 180 to 200 (VLHILPLLLSWISFWLLYSIV) traverse the membrane as a helical segment. At 201–209 (PTTRVPNRD) the chain is on the cytoplasmic side. A helical transmembrane segment spans residues 210 to 230 (ALVGAFVAALLFEAGKKGFAL). The Periplasmic portion of the chain corresponds to 231–243 (YITMFPSYQLIYG). The helical transmembrane segment at 244-264 (VLAVIPILFVWVYWTWCIVLL) threads the bilayer. Residues 265 to 290 (GAEITVTLGEYRKLKQAAEQEEADQP) are Cytoplasmic-facing.

It belongs to the UPF0761 family.

Its subcellular location is the cell inner membrane. This Salmonella typhimurium (strain LT2 / SGSC1412 / ATCC 700720) protein is UPF0761 membrane protein YihY.